A 570-amino-acid polypeptide reads, in one-letter code: Urease subunit alpha (570 aa).

A Urease domain is found at 131 to 570; the sequence is GGFDSHIHFI…LPMAQRYFMY (440 aa). Ni(2+) contacts are provided by histidine 136, histidine 138, and lysine 219. Residue lysine 219 is modified to N6-carboxylysine. Histidine 221 contributes to the substrate binding site. Histidine 248 and histidine 274 together coordinate Ni(2+). The active-site Proton donor is the histidine 322. Aspartate 362 is a Ni(2+) binding site.

The protein belongs to the metallo-dependent hydrolases superfamily. Urease alpha subunit family. In terms of assembly, heterotrimer of UreA (gamma), UreB (beta) and UreC (alpha) subunits. Three heterotrimers associate to form the active enzyme. Ni cation is required as a cofactor. In terms of processing, carboxylation allows a single lysine to coordinate two nickel ions.

The protein resides in the cytoplasm. It catalyses the reaction urea + 2 H2O + H(+) = hydrogencarbonate + 2 NH4(+). The protein operates within nitrogen metabolism; urea degradation; CO(2) and NH(3) from urea (urease route): step 1/1. The sequence is that of Urease subunit alpha from Rhodopseudomonas palustris (strain BisB18).